A 347-amino-acid polypeptide reads, in one-letter code: MTTKMFYDKDIDTTPLENKKIAVIGYGAQGHAQANNLRDSGFDVIMGLRPGKSFDSAKKDGFEVYSAAEATAQADVVMMETPDELQAAVWEKEVEPNLKAGSYLGFSHGFNIVYGLIKPNADINVMIIAPKGPGNIERRQFVEGGGIPSLYGVHQDPTGDTAEVAKAYAKGIGSGRAGILETTFEEETTEDLFGEQAVLCGGLTQLIEAGFNTLVEAGYSPELAYFETSHEMKMIVDLIFEGGFEKMRHDCSNTCEYGEMLNGPRIITEESKQGMRDVLKDIQDGTYAKKWLAEYNSGLKDLEKMRTEYKSGLYEQTGKKVRAMMPWISDADKYSTAADTEQFSAAK.

Residues 3–182 (TKMFYDKDID…GSGRAGILET (180 aa)) form the KARI N-terminal Rossmann domain. Residues 26-29 (YGAQ), R49, S53, and 83-86 (DELQ) each bind NADP(+). The active site involves H108. Residue G134 participates in NADP(+) binding. In terms of domain architecture, KARI C-terminal knotted spans 183 to 328 (TFEEETTEDL…KKVRAMMPWI (146 aa)). The Mg(2+) site is built by D191, E195, E227, and E231. Substrate is bound at residue S252.

Belongs to the ketol-acid reductoisomerase family. Requires Mg(2+) as cofactor.

It catalyses the reaction (2R)-2,3-dihydroxy-3-methylbutanoate + NADP(+) = (2S)-2-acetolactate + NADPH + H(+). It carries out the reaction (2R,3R)-2,3-dihydroxy-3-methylpentanoate + NADP(+) = (S)-2-ethyl-2-hydroxy-3-oxobutanoate + NADPH + H(+). The protein operates within amino-acid biosynthesis; L-isoleucine biosynthesis; L-isoleucine from 2-oxobutanoate: step 2/4. It participates in amino-acid biosynthesis; L-valine biosynthesis; L-valine from pyruvate: step 2/4. In terms of biological role, involved in the biosynthesis of branched-chain amino acids (BCAA). Catalyzes an alkyl-migration followed by a ketol-acid reduction of (S)-2-acetolactate (S2AL) to yield (R)-2,3-dihydroxy-isovalerate. In the isomerase reaction, S2AL is rearranged via a Mg-dependent methyl migration to produce 3-hydroxy-3-methyl-2-ketobutyrate (HMKB). In the reductase reaction, this 2-ketoacid undergoes a metal-dependent reduction by NADPH to yield (R)-2,3-dihydroxy-isovalerate. The protein is Ketol-acid reductoisomerase (NADP(+)) of Leuconostoc mesenteroides subsp. mesenteroides (strain ATCC 8293 / DSM 20343 / BCRC 11652 / CCM 1803 / JCM 6124 / NCDO 523 / NBRC 100496 / NCIMB 8023 / NCTC 12954 / NRRL B-1118 / 37Y).